A 322-amino-acid chain; its full sequence is Arginase-1 (322 aa).

The segment at 1–27 (MSSKPQSIGVIGAPFSKGQPRGGVEEG) is disordered. Phosphoserine is present on Ser7. Residue Lys17 is modified to N6-succinyllysine. At Ser62 the chain carries Phosphoserine. The residue at position 75 (Lys75) is an N6-succinyllysine. His101, Asp124, His126, and Asp128 together coordinate Mn(2+). Residues 126-130 (HTDIN), 137-139 (TGN), and Asp183 contribute to the substrate site. Phosphoserine is present on Ser217. Mn(2+) is bound by residues Asp232 and Asp234. The substrate site is built by Thr246 and Glu277.

Belongs to the arginase family. As to quaternary structure, homotrimer. Interacts with CMTM6. Mn(2+) is required as a cofactor.

It localises to the cytoplasm. It catalyses the reaction L-arginine + H2O = urea + L-ornithine. Its pathway is nitrogen metabolism; urea cycle; L-ornithine and urea from L-arginine: step 1/1. This Bos taurus (Bovine) protein is Arginase-1 (ARG1).